A 712-amino-acid polypeptide reads, in one-letter code: Dynamin-1-like protein drp-1 (712 aa).

The Dynamin-type G domain occupies 24–304 (QIQLPQIVVV…LMHHIRNCLP (281 aa)). The tract at residues 34–41 (GSQSAGKS) is G1 motif. Positions 60–62 (VTR) are G2 motif. Residues 148-151 (DLPG) are G3 motif. The tract at residues 217–220 (TKLD) is G4 motif. Residues 247–250 (VNRS) form a G5 motif region. The interval 280–502 (SRNGTPYLAK…LAYINTKHPE (223 aa)) is interaction with caspase ced-9. A disordered region spans residues 523–542 (GRSRNRHASTGERAVSAHGE). A GED domain is found at 620 to 711 (VAIIERLIRN…IISEVRETQV (92 aa)).

It belongs to the TRAFAC class dynamin-like GTPase superfamily. Dynamin/Fzo/YdjA family. As to quaternary structure, interacts (via residues 280-502) with caspase ced-9; the interaction is enhanced by GTP rather than GDP; the interaction is probably direct and may occur at the mitochondrion. In terms of tissue distribution, highly expressed in neurons, in intestinal cells and in the body wall, pharyngeal, and vulval muscles.

It is found in the mitochondrion. The protein localises to the mitochondrion outer membrane. The protein resides in the cytoplasm. It localises to the cytosol. The catalysed reaction is GTP + H2O = GDP + phosphate + H(+). Its activity is regulated as follows. GTPase activity is increased by binding to phospholipid membranes. Functions in mitochondrial division. Functions in peroxisomal division. Mediates membrane fission, perhaps mainly of the mitochondrial outer membrane. Mitochondrial fission may be promoted by recruitment to mitochondrial membranes via the egl-1/ced-9 complex. Involved in the coordination of mitochondrial division with autophagy in response to acute heat stress during larval development. Plays a role in apoptosis by promoting mitochondrial elimination and cell-death execution, acting downstream of caspase ced-3, and perhaps independently of FIS1-related protein fis-2, caspase ced-9 and apoptosis-inducing factor AIFM/wah-1. Role in promoting apoptosis dependent upon cleavage of drp-1 by ced-3. Involved in negatively modulating longevity in concert with the Insulin/IGF-1-like signaling (IIS) mediated pathway. This Caenorhabditis elegans protein is Dynamin-1-like protein drp-1.